We begin with the raw amino-acid sequence, 865 residues long: MERAGPGSARPQQQWDQDSVEAWLDDHWDFTFSYFVRKGTREMVNAWFAERVHTIPVCKEGIKGHTESCSCPLQPSPRAESSVPGTPTRKISASEFDRPLRPIVIKDSEGTVSFLSDSDKKEQMPLTSPRFDNDEGDQCSRLLELVKDISSHLDVTALCHKIFLHIHGLISADRYSLFLVCEDSSNDKFLISRLFDVAEGSTLEEASNNCIRLEWNKGIVGHVAAFGEPLNIKDAYEDPRFNAEVDQITGYKTQSILCMPIKNHREEVVGVAQAINKKSGNGGTFTEKDEKDFAAYLAFCGIVLHNAQLYETSLLENKRNQVLLDLASLIFEEQQSLEVILKKIAATIISFMQVQKCTIFIVDEDCSDSFSSVFHMECEELEKSSDTLTRERDANRINYMYAQYVKNTMEPLNIPDVSKDKRFPWTNENMGNINQQCIRSLLCTPIKNGKKNKVIGVCQLVNKMEETTGKVKAFNRNDEQFLEAFVIFCGLGIQNTQMYEAVERAMAKQMVTLEVLSYHASAAEEETRELQSLAAAVVPSAQTLKITDFSFSDFELSDLETALCTIRMFTDLNLVQNFQMKHEVLCKWILSVKKNYRKNVAYHNWRHAFNTAQCMFAALKAGKIQKRLTDLEILALLIAALSHDLDHRGVNNSYIQRSEHPLAQLYCHSIMEHHHFDQCLMILNSPGNQILSGLSIEEYKTTLKIIKQAILATDLALYIKRRGEFFELIMKNQFNLEDPHQKELFLAMLMTACDLSAITKPWPIQQRIAELVATEFFDQGDRERKELNIEPADLMNREKKNKIPSMQVGFIDAICLQLYEALTHVSEDCFPLLDGCRKNRQKWQALAEQQEKTLINGESSQTKRN.

The residue at position 92 (Ser-92) is a Phosphoserine. 2 consecutive GAF domains span residues 154-304 and 336-493; these read DVTA…GIVL and SLEV…GLGI. The PDEase domain maps to 526 to 850; it reads ETRELQSLAA…QKWQALAEQQ (325 aa). Catalysis depends on His-603, which acts as the Proton donor. Zn(2+) is bound by residues His-607, His-643, Asp-644, and Asp-754. Asp-644 contributes to the Mg(2+) binding site. Gln-807 provides a ligand contact to 3',5'-cyclic GMP.

This sequence belongs to the cyclic nucleotide phosphodiesterase family. Requires Zn(2+) as cofactor. The cofactor is Mg(2+). Phosphorylation is regulated by binding of cGMP to the two allosteric sites. Phosphorylation by PRKG1 leads to its activation.

It catalyses the reaction 3',5'-cyclic GMP + H2O = GMP + H(+). It participates in purine metabolism; 3',5'-cyclic GMP degradation; GMP from 3',5'-cyclic GMP: step 1/1. Its activity is regulated as follows. Most potently inhibited by zaprinast and dipyridamole. Its function is as follows. Plays a role in signal transduction by regulating the intracellular concentration of cyclic nucleotides. This phosphodiesterase catalyzes the specific hydrolysis of cGMP to 5'-GMP. Specifically regulates nitric-oxide-generated cGMP. This is cGMP-specific 3',5'-cyclic phosphodiesterase (PDE5A) from Bos taurus (Bovine).